The chain runs to 558 residues: uncharacterized protein (558 aa).

Positions 47-78 (DFDDLNSIFKDFQKQKKNLKDNILKFYNKKKE) form a coiled coil. Disordered stretches follow at residues 239–266 (NNNN…SKIE) and 424–447 (NNNN…NSGE). Residues 245–266 (TETESEIESKSESESESESKIE) are compositionally biased toward basic and acidic residues. The segment covering 424–444 (NNNNNNNNNNNNNNNNNNNNN) has biased composition (low complexity).

This is an uncharacterized protein from Dictyostelium discoideum (Social amoeba).